We begin with the raw amino-acid sequence, 161 residues long: V-type proton ATPase 16 kDa proteolipid subunit c 2 (161 aa).

The Lumenal segment spans residues 1–15; it reads MSYDLETAERAAYAP. Residues 16–36 traverse the membrane as a helical segment; the sequence is FFGYMGAASAQIFTVLGAAYG. At 37-58 the chain is on the cytoplasmic side; the sequence is TAKSAVGICSMGVMRPELIMKS. The chain crosses the membrane as a helical span at residues 59–79; it reads VIPVIMAGIIGIYGLVVAMVL. At 80 to 98 the chain is on the lumenal side; it reads KGKVTSASAGYDLNKGFAH. Residues 99-119 form a helical membrane-spanning segment; it reads LAAGLTCGLCGLGAGYAIGIV. Residues 120–137 are Cytoplasmic-facing; sequence GDAGVRGTAQQPRLFVGM. A helical membrane pass occupies residues 138-158; that stretch reads ILILIFSEVLGLYGMIVALIL. Topologically, residues 159 to 161 are lumenal; that stretch reads GTS.

Belongs to the V-ATPase proteolipid subunit family. In terms of assembly, V-ATPase is a heteromultimeric enzyme made up of two complexes: the ATP-hydrolytic V1 complex and the proton translocation V0 complex. The V1 complex consists of three catalytic AB heterodimers that form a heterohexamer, three peripheral stalks each consisting of EG heterodimers, one central rotor including subunits D and F, and the regulatory subunits C and H. The proton translocation complex V0 consists of the proton transport subunit a, a ring of proteolipid subunits c9c'', rotary subunit d, subunits e and f, and the accessory subunits vah-19/Ac45 and vah-20/PRR. Expressed in the H-shaped excretory cell, rectum, and a pair of cells posterior to the anus.

The protein resides in the membrane. Proton-conducting pore forming subunit of the V0 complex of vacuolar(H+)-ATPase (V-ATPase), a multisubunit enzyme composed of a peripheral complex (V1) that hydrolyzes ATP and a membrane integral complex (V0) that translocates protons. V-ATPase is responsible for acidifying and maintaining the pH of intracellular compartments and in some cell types, is targeted to the plasma membrane, where it is responsible for acidifying the extracellular environment. Involved in necrotic cell death. Required along with other vacuolar ATPase components for the removal of protein aggregates which form in immature oocytes in the distal gonad. This removal occurs as the oocytes mature and move to the proximal gonad, is triggered by the introduction of sperm through mating and occurs before fertilization. The introduction of sperm triggers V-ATPase accumulation in proximal oocytes and induces lysosomal acidification which leads to engulfing of protein aggregates by lysosomes and subsequent clearance of the aggregates. Lysosomal acidification also leads to changes in mitochondrial morphology and function. Mitochondria in distal immature oocytes are fragmented, produce high levels of reactive oxygen species (ROS) and have high membrane potential, indicative of metabolic inactivity. In contrast, mitochondria in proximal mature oocytes are tubular with lower ROS levels and membrane potential, indicative of an active metabolic state required for aggregate mobilization before clearance. This chain is V-type proton ATPase 16 kDa proteolipid subunit c 2, found in Caenorhabditis elegans.